A 452-amino-acid chain; its full sequence is Pup--protein ligase 1 (452 aa).

Glutamate 9 lines the Mg(2+) pocket. Arginine 53 contacts ATP. Tyrosine 55 provides a ligand contact to Mg(2+). The Proton acceptor role is filled by aspartate 57. Residue glutamate 63 coordinates Mg(2+). Positions 66 and 419 each coordinate ATP.

The protein belongs to the Pup ligase/Pup deamidase family. Pup-conjugating enzyme subfamily.

It carries out the reaction ATP + [prokaryotic ubiquitin-like protein]-L-glutamate + [protein]-L-lysine = ADP + phosphate + N(6)-([prokaryotic ubiquitin-like protein]-gamma-L-glutamyl)-[protein]-L-lysine.. It participates in protein degradation; proteasomal Pup-dependent pathway. Its pathway is protein modification; protein pupylation. In terms of biological role, catalyzes the covalent attachment of the prokaryotic ubiquitin-like protein modifier Pup to the proteasomal substrate proteins, thereby targeting them for proteasomal degradation. This tagging system is termed pupylation. The ligation reaction involves the side-chain carboxylate of the C-terminal glutamate of Pup and the side-chain amino group of a substrate lysine. The sequence is that of Pup--protein ligase 1 from Rhodococcus erythropolis (Arthrobacter picolinophilus).